We begin with the raw amino-acid sequence, 156 residues long: Small ribosomal subunit protein uS7 (156 aa).

It belongs to the universal ribosomal protein uS7 family. In terms of assembly, part of the 30S ribosomal subunit. Contacts proteins S9 and S11.

Functionally, one of the primary rRNA binding proteins, it binds directly to 16S rRNA where it nucleates assembly of the head domain of the 30S subunit. Is located at the subunit interface close to the decoding center, probably blocks exit of the E-site tRNA. This chain is Small ribosomal subunit protein uS7, found in Rhodospirillum centenum (strain ATCC 51521 / SW).